The primary structure comprises 153 residues: Ribosome maturation factor RimP (153 aa).

This sequence belongs to the RimP family.

The protein resides in the cytoplasm. Required for maturation of 30S ribosomal subunits. This is Ribosome maturation factor RimP from Clostridium botulinum (strain Kyoto / Type A2).